Consider the following 359-residue polypeptide: Dual-specificity RNA methyltransferase RlmN (359 aa).

The active-site Proton acceptor is the Glu102. A Radical SAM core domain is found at 108-351 (EKKRATLCIS…IRKNRGSDIQ (244 aa)). A disulfide bridge connects residues Cys115 and Cys354. Positions 122, 126, and 129 each coordinate [4Fe-4S] cluster. S-adenosyl-L-methionine is bound by residues 178–179 (GE), Ser210, 232–234 (SLH), and Asn311. Cys354 acts as the S-methylcysteine intermediate in catalysis.

Belongs to the radical SAM superfamily. RlmN family. Requires [4Fe-4S] cluster as cofactor.

The protein resides in the cytoplasm. The catalysed reaction is adenosine(2503) in 23S rRNA + 2 reduced [2Fe-2S]-[ferredoxin] + 2 S-adenosyl-L-methionine = 2-methyladenosine(2503) in 23S rRNA + 5'-deoxyadenosine + L-methionine + 2 oxidized [2Fe-2S]-[ferredoxin] + S-adenosyl-L-homocysteine. The enzyme catalyses adenosine(37) in tRNA + 2 reduced [2Fe-2S]-[ferredoxin] + 2 S-adenosyl-L-methionine = 2-methyladenosine(37) in tRNA + 5'-deoxyadenosine + L-methionine + 2 oxidized [2Fe-2S]-[ferredoxin] + S-adenosyl-L-homocysteine. Functionally, specifically methylates position 2 of adenine 2503 in 23S rRNA and position 2 of adenine 37 in tRNAs. m2A2503 modification seems to play a crucial role in the proofreading step occurring at the peptidyl transferase center and thus would serve to optimize ribosomal fidelity. The sequence is that of Dual-specificity RNA methyltransferase RlmN from Buchnera aphidicola subsp. Cinara cedri (strain Cc).